The primary structure comprises 390 residues: 1-deoxy-D-xylulose 5-phosphate reductoisomerase (390 aa).

The NADPH site is built by T10, G11, S12, V13, G38, N40, and N123. A 1-deoxy-D-xylulose 5-phosphate-binding site is contributed by K124. Residue E125 coordinates NADPH. Mn(2+) is bound at residue D149. Residues S150, E151, S175, and H198 each contribute to the 1-deoxy-D-xylulose 5-phosphate site. E151 is a binding site for Mn(2+). G204 is a binding site for NADPH. The 1-deoxy-D-xylulose 5-phosphate site is built by S211, N216, K217, and E220. E220 is a binding site for Mn(2+).

It belongs to the DXR family. Mg(2+) is required as a cofactor. Requires Mn(2+) as cofactor.

It catalyses the reaction 2-C-methyl-D-erythritol 4-phosphate + NADP(+) = 1-deoxy-D-xylulose 5-phosphate + NADPH + H(+). It participates in isoprenoid biosynthesis; isopentenyl diphosphate biosynthesis via DXP pathway; isopentenyl diphosphate from 1-deoxy-D-xylulose 5-phosphate: step 1/6. Its function is as follows. Catalyzes the NADPH-dependent rearrangement and reduction of 1-deoxy-D-xylulose-5-phosphate (DXP) to 2-C-methyl-D-erythritol 4-phosphate (MEP). The chain is 1-deoxy-D-xylulose 5-phosphate reductoisomerase from Paracoccus denitrificans (strain Pd 1222).